The sequence spans 645 residues: 1,4-alpha-glucan branching enzyme GlgB (645 aa).

Asp309 serves as the catalytic Nucleophile. Glu352 functions as the Proton donor in the catalytic mechanism. The disordered stretch occupies residues 619–645; it reads VKTRKGSKKQDGSKTKVRSNVTSRGKR. Positions 636-645 are enriched in polar residues; the sequence is RSNVTSRGKR.

The protein belongs to the glycosyl hydrolase 13 family. GlgB subfamily. In terms of assembly, monomer.

The catalysed reaction is Transfers a segment of a (1-&gt;4)-alpha-D-glucan chain to a primary hydroxy group in a similar glucan chain.. The protein operates within glycan biosynthesis; glycogen biosynthesis. In terms of biological role, catalyzes the formation of the alpha-1,6-glucosidic linkages in glycogen by scission of a 1,4-alpha-linked oligosaccharide from growing alpha-1,4-glucan chains and the subsequent attachment of the oligosaccharide to the alpha-1,6 position. The polypeptide is 1,4-alpha-glucan branching enzyme GlgB (Bacillus cereus (strain AH187)).